The following is a 96-amino-acid chain: Aspartyl/glutamyl-tRNA(Asn/Gln) amidotransferase subunit C (96 aa).

It belongs to the GatC family. As to quaternary structure, heterotrimer of A, B and C subunits.

It catalyses the reaction L-glutamyl-tRNA(Gln) + L-glutamine + ATP + H2O = L-glutaminyl-tRNA(Gln) + L-glutamate + ADP + phosphate + H(+). The catalysed reaction is L-aspartyl-tRNA(Asn) + L-glutamine + ATP + H2O = L-asparaginyl-tRNA(Asn) + L-glutamate + ADP + phosphate + 2 H(+). Its function is as follows. Allows the formation of correctly charged Asn-tRNA(Asn) or Gln-tRNA(Gln) through the transamidation of misacylated Asp-tRNA(Asn) or Glu-tRNA(Gln) in organisms which lack either or both of asparaginyl-tRNA or glutaminyl-tRNA synthetases. The reaction takes place in the presence of glutamine and ATP through an activated phospho-Asp-tRNA(Asn) or phospho-Glu-tRNA(Gln). In Wolinella succinogenes (strain ATCC 29543 / DSM 1740 / CCUG 13145 / JCM 31913 / LMG 7466 / NCTC 11488 / FDC 602W) (Vibrio succinogenes), this protein is Aspartyl/glutamyl-tRNA(Asn/Gln) amidotransferase subunit C.